A 3206-amino-acid polypeptide reads, in one-letter code: MSATPAPIAIIGVGCRLPGGASDLDKLWKLLSEGRSGRTEIPADRWAAEEWFDAYPDAKESIVTKHGFFLKEDISQFDAKFFGISNTEAHAMDPQQRLFLMTTFEALEDAAIRVETLRGSNTGVFASIFERSYDRMGHKDLATISNTHMNGTGEATVLSNRISYCFDLKGPCMTIDTGCSGSLVALHQACQSLRLGESDLALVGGSQLVIHPDALSIMSGMGMLNPDGKSYAFDSRGQGYGRGEGVATIVLKRLDQALEDGDRIHAVIANSGVNQDGKTSGLNTPSGDAQAALASRVYREAGLNPADTSFVEAHGTGTQVGDREEIASISKVFCDDVARTDDLYVGSIKPNVGHLEATSGIAGLLKCILVLKHGQIPQNLDFIKPKPSLKLYERKIKIPTELTKLPTTRSGGPVRVSLNSFGYGGTNCHVILEAADSGRQPTGTNGIKTNGTRINGIKTNGADTNERESMKNGLSDGYQASLLDNATSHRPELIVLSASTEEALSSRAQDLLLWIKSRQVAPQTLHSLAYTLGVHRSALPYRRAIVAPTTEELVAELKVQGPAKRTASQAPVTFVFSGQGAQWHAMGLELIHFSHVFQQSMSAMEDALRRQGCPWSLVEELSKSPEHSRVGEAEIAQPATTAIQIALVDLLDSFSIRPSRVVGHSSGEIAAAYAAGALSRESAILVAYQRGVSSAKAKKMADVPGAMMAVSLDETEAMRYLKKLTQGAAVVACVNSPSSQTLSGDETAIDEIKEALDKDGIFARKLRVDTAYHSHHMQRVAEDYQEAISSIQSSGVRDGVTFYSSVTGAIKSAGFGADYWTSNLVSQVKFSQALTLLRKDQIKQDANMDMGVFVEIGPHSALAGPSRQTLGHEGAKKYKFEYLSALQRNTDALQSTLALGGRLFELGLKVDMTAVLTVADKTKPEIIRDLPLYPWDLAPFWRESRLSKARRFRQFPHHDLLGLFDPASTIHEPRWRYLINLDSLPWLRGHVVEGFTLYPGAGYLTMAIEATKQLVQMRGLQKPIAKFMLRNVAISKSIVLNEPDESSSGEVEVQLSMSAANEYEGSRWESFRIRSYNTADASWSEHCSGEITVEYETDEPDEVEGTREGELRQEEAMQFLATCQQSCDTDMTKSEFYDFAGRTGNEFSGAFTPIVSASYGKNRGVCEICTPDIAPLMPYRSFRPHVIHPITLDATQQINAVLFKKFITNAACVPTKIPLLEISASLFTTPGNSLTGAMQIEADGPKASNCEGWVFQKDEDGHVSPVIRLLVNLRAIGETREDEDRPFVQDAVNRLDWNLDADFMTQTSFRQVLSSTLGLEENTTHGFDGTKVSIQESDREYLETDQASSIWFRDAVRYVEENNAGMVTPQQVQFLGWMKRWLSSDYCRQITSGLTPEDEKRILQNVESSETSAQLQLLARVGKALPRILTGEIQPLDVMLEGNLLSRYYESGILVGPYEAVVEYLKILTFKNPRLHVLEAGAGTGGCTKWLFRGLSGQNGAVGLPVEKYTFTDVSSGFFEDARQTFAQWEDIMEFRTLDVDADPIEQGFEPGSYDVVVAANVLHATRKIDVTISRVRKLLKPGGSLVLVEIEPRGAAFGLVAGGLTGWWASEDDFRVEGPLLFRSQWQDVLARNGFGGIHVSWECMMVAKAEPAPSTNGTHARHSVVLIRDGGDDHVVKTAAKEFASRGIDIIDCPWEQVTAQEESVYVILDRAEKRLLLDPQPELFGIVNALVSAKCRLLWVLLQDTADYAASAYKGLVNAFIRVLRRESSNTGLVTLDIRQPALHPEVIAQVIADVARRRFWAATEDTLSSEPEFAYEDCRILIPRVKPDADFLQWARRRTWPAAADETETVPYQGDRVLKAEVATPGLLSSLRFVDDDMSACVGPSQIEIKAEAHGVNYKDVLLALGQRGSGAHMAGEFVGVVTAVGEDMRDLHQVGDRVMGFGSQPFSNQSRVHGHLARKTPDWMAATVAASIPHAYVTAYHCIMGIARLERGQSILIQAASGGVGQAAIQLAQHIGAVVFCTVSTSAKQNLIIDEYGIPESHIFSSQQTGSLKRGIMRLTNGKGVDLVLNSSAGEALRDSLDCVRSLGTFIELGKTEMQQASQLSMAAFNRSITFHAFDLETLSARDPRRVHRTLGDIISLLESKALRPIQPITIYPIDEIEDAFRFLASRKHTGKVVLQVEPTSMVKCLPAKPQPLRVRKDGTYVAAGGLGDLTSRICVFLASRGAGHVVSLSRRAIDDETKQKYMAAVREHGGELHILQCDITDEESMQRAAAYCSKLPPVRGVVNGALVLRDRTFAQMSIEEWKLPLQPKVFGTLNLDKYFASPDLAFFLTLSSVVAVVGKAGQSNYAAGNGFQDAFALAHANHPHTHYISVNVGAVSVDAHGALKEATQGDMSIGGMRASLRQNSVMDISFDEFFADIEYAMSGLARDHHRHQTIQGVTHQSMLDANDEHLLENPVFSQLTHSQRRQATGATQTDKIDLKKALGGVETMEEAEQLIRDATLTKFAVFLDRPIEDIRVDQSLATIGLDSLVSIELKNWMVRTFQVNLQTSELGGAGSIVALAATVASRSKLIPDKIRHSSRLQEATTQAENKDAPKNEKEGPSHNFYCCRASKDLPRHPLVDLDEAIHDLLNSIGHFAHTQEEYAELRRKAHALTAPGSLGRRLYSQLRAKADDPSVESWIAGPLLKALHLKRRYPLVPFSSFLGTHFDSAVPHSQAQRAAALTRALCEFKHDLDNRKLKPDFLGERPNCGHSLTWLFNALREPNVGCDKMVRYPGVEHVAVLRRGHLFRVPLREGNDIVSYQKLKATYQAILNLDLEEKLWTGILTTDNRDSWATNRQTLLALDERNTAYIKTLEESVVVMCLDDNSPVTREERVRFGYLGDSFNRWHDKTIQLVVTANGRSGTIFEHSMIDFMTTSQISQRLQAAIDTLDPENDNHGQDVEAVVDPASLKEIALVATTTEIEARMIMLRDKYAATTGRKIYTPHLIPSFGKAVLLAHAVPIKATVDLTIQLASRLYFGYLPASWETVSTAHFHLGRPEIVQVVLKSVVDFCDAALDSSVPRAEARVQLLRAAREMNAQIVKGGEGRNYFRLMDVLEVMSHEAVDEGAADAVPELFADPVWQRSYPRLIMQTMIERKLAQDPGYTMEDPENVWMNYTVNEDSLEVCYVSPRTGAERFKAALDRATDIIKTIIQAGQE.

A Ketosynthase family 3 (KS3) domain is found at Pro5–Ala434. Catalysis depends on for beta-ketoacyl synthase activity residues Cys179, His314, and His354. Residues Pro441 to Asp463 show a composition bias toward polar residues. The tract at residues Pro441 to Asn472 is disordered. The interval Val575–Thr890 is malonyl-CoA:ACP transacylase (MAT) domain. Positions His958 to Asp1098 are N-terminal hotdog fold. The dehydratase (DH) domain stretch occupies residues His958–Glu1278. Residues His958–Asp1284 form the PKS/mFAS DH domain. His990 serves as the catalytic Proton acceptor; for dehydratase activity. The tract at residues Asp1128 to Asp1284 is C-terminal hotdog fold. Asp1193 acts as the Proton donor; for dehydratase activity in catalysis. Residues Glu1450–His1640 are methyltransferase (CMet) domain. The segment at Leu1871 to Gln2185 is enoyl reductase (ER) domain. Positions Gly2208–Glu2395 are ketoreductase (KR) domain. The region spanning Glu2499–Ser2577 is the Carrier domain. Ser2537 carries the post-translational modification O-(pantetheine 4'-phosphoryl)serine. Residues Ile2584–Ser2611 are disordered. The span at Glu2598–Pro2610 shows a compositional bias: basic and acidic residues. The interval His2994–Glu3206 is carnitine O-acyltransferase (cAT) domain.

Requires pantetheine 4'-phosphate as cofactor.

Its pathway is secondary metabolite biosynthesis. Functionally, highly reducing polyketide synthase; part of the gene cluster that mediates the biosynthesis of luteodienoside A, a glycosylated polyketide consisting of an unusual 1-O-beta-D-glucopyranosyl-myo-inositol (glucinol) ester of 3-hydroxy-2,2,4-trimethylocta-4,6-dienoic acid. LtbA produces the trimethylated polyketide chain from acetyl-CoA, malonyl-CoA and S-adenosylmethionine (SAM). The ltbA carnitine O-acyltransferase (cAT) domain then uses glucinol produced by the glycosyltransferase ltbB as an offloading substrate to release luteodienoside A. Furthermore, the PKS C-methyltransferase (CMeT) domain is capable of catalysing gem-dimethylation of the 3-hydroxy-2,2,4-trimethylocta-4,6-dienoic acid intermediate, without requiring reversible product release and recapture by the cAT domain. Since ltbA and ltbB are sufficient for the biosynthesis of luteodienoside A, the functions of the methyltransferase ltbC and the FAD-binding monooxygenase ltbD within the pathway remain obscur. The chain is Highly reducing polyketide synthase ltbA from Aspergillus luteorubrus.